A 1162-amino-acid polypeptide reads, in one-letter code: DNA-directed RNA polymerase subunit beta (1162 aa).

It belongs to the RNA polymerase beta chain family. As to quaternary structure, the RNAP catalytic core consists of 2 alpha, 1 beta, 1 beta' and 1 omega subunit. When a sigma factor is associated with the core the holoenzyme is formed, which can initiate transcription.

It carries out the reaction RNA(n) + a ribonucleoside 5'-triphosphate = RNA(n+1) + diphosphate. DNA-dependent RNA polymerase catalyzes the transcription of DNA into RNA using the four ribonucleoside triphosphates as substrates. This is DNA-directed RNA polymerase subunit beta from Clavibacter sepedonicus (Clavibacter michiganensis subsp. sepedonicus).